The primary structure comprises 151 residues: Ribosome maturation factor RimP (151 aa).

Belongs to the RimP family.

The protein resides in the cytoplasm. Functionally, required for maturation of 30S ribosomal subunits. The polypeptide is Ribosome maturation factor RimP (Shewanella sediminis (strain HAW-EB3)).